The sequence spans 647 residues: DNA mismatch repair protein MutL (647 aa).

The tract at residues serine 389 to tyrosine 423 is disordered. Basic and acidic residues predominate over residues arginine 409–tyrosine 423.

This sequence belongs to the DNA mismatch repair MutL/HexB family.

Its function is as follows. This protein is involved in the repair of mismatches in DNA. It is required for dam-dependent methyl-directed DNA mismatch repair. May act as a 'molecular matchmaker', a protein that promotes the formation of a stable complex between two or more DNA-binding proteins in an ATP-dependent manner without itself being part of a final effector complex. The protein is DNA mismatch repair protein MutL of Streptococcus thermophilus (strain ATCC BAA-491 / LMD-9).